The sequence spans 164 residues: MASIAVCPGSFDPVTFGHLDIIRRGAKVFDKVYVCVLNNSSKKPLFTVEERCGLLREVTQDIPNVQVESFQGLLIDYAKSKQANVILRGLRAVSDFEYEMQGTSMNKVLDENIETFFMMTNNQYSFLSSSIVKEVAKYKGSVAELVPEAVEAALEKKFAKNERP.

Ser10 lines the substrate pocket. Residues 10 to 11 (SF) and His18 each bind ATP. Residues Lys42, Leu74, and Arg88 each coordinate substrate. ATP is bound by residues 89-91 (GLR), Glu99, and 124-130 (YSFLSSS).

Belongs to the bacterial CoaD family. In terms of assembly, homohexamer. It depends on Mg(2+) as a cofactor.

It localises to the cytoplasm. It catalyses the reaction (R)-4'-phosphopantetheine + ATP + H(+) = 3'-dephospho-CoA + diphosphate. Its pathway is cofactor biosynthesis; coenzyme A biosynthesis; CoA from (R)-pantothenate: step 4/5. Its function is as follows. Reversibly transfers an adenylyl group from ATP to 4'-phosphopantetheine, yielding dephospho-CoA (dPCoA) and pyrophosphate. In Bacillus licheniformis (strain ATCC 14580 / DSM 13 / JCM 2505 / CCUG 7422 / NBRC 12200 / NCIMB 9375 / NCTC 10341 / NRRL NRS-1264 / Gibson 46), this protein is Phosphopantetheine adenylyltransferase.